The primary structure comprises 625 residues: tRNA uridine 5-carboxymethylaminomethyl modification enzyme MnmG (625 aa).

Residue 13 to 18 (GGGHAG) coordinates FAD. 273–287 (GPRYCPSIEDKVVRF) contacts NAD(+).

Belongs to the MnmG family. Homodimer. Heterotetramer of two MnmE and two MnmG subunits. The cofactor is FAD.

It is found in the cytoplasm. NAD-binding protein involved in the addition of a carboxymethylaminomethyl (cmnm) group at the wobble position (U34) of certain tRNAs, forming tRNA-cmnm(5)s(2)U34. The protein is tRNA uridine 5-carboxymethylaminomethyl modification enzyme MnmG of Methylococcus capsulatus (strain ATCC 33009 / NCIMB 11132 / Bath).